The primary structure comprises 429 residues: Enolase (429 aa).

Glutamine 163 contacts (2R)-2-phosphoglycerate. The active-site Proton donor is the glutamate 205. Residues aspartate 242, glutamate 285, and aspartate 312 each contribute to the Mg(2+) site. Residues lysine 337, arginine 366, serine 367, and lysine 388 each contribute to the (2R)-2-phosphoglycerate site. The Proton acceptor role is filled by lysine 337.

The protein belongs to the enolase family. Requires Mg(2+) as cofactor.

Its subcellular location is the cytoplasm. It localises to the secreted. The protein resides in the cell surface. The catalysed reaction is (2R)-2-phosphoglycerate = phosphoenolpyruvate + H2O. It participates in carbohydrate degradation; glycolysis; pyruvate from D-glyceraldehyde 3-phosphate: step 4/5. Catalyzes the reversible conversion of 2-phosphoglycerate (2-PG) into phosphoenolpyruvate (PEP). It is essential for the degradation of carbohydrates via glycolysis. The protein is Enolase of Methylorubrum extorquens (strain PA1) (Methylobacterium extorquens).